The following is a 547-amino-acid chain: Chaperonin GroEL 1 (547 aa).

Residues 30–33 (TLGP), K51, 87–91 (DGTTT), G415, and D494 contribute to the ATP site. The interval 524–547 (PKGKAKGGGAGAGMPDYGGDDMDY) is disordered.

This sequence belongs to the chaperonin (HSP60) family. Forms a cylinder of 14 subunits composed of two heptameric rings stacked back-to-back. Interacts with the co-chaperonin GroES.

The protein localises to the cytoplasm. It catalyses the reaction ATP + H2O + a folded polypeptide = ADP + phosphate + an unfolded polypeptide.. Together with its co-chaperonin GroES, plays an essential role in assisting protein folding. The GroEL-GroES system forms a nano-cage that allows encapsulation of the non-native substrate proteins and provides a physical environment optimized to promote and accelerate protein folding. This is Chaperonin GroEL 1 from Myxococcus xanthus (strain DK1622).